A 253-amino-acid chain; its full sequence is Probable U2 small nuclear ribonucleoprotein A' (253 aa).

4 LRR repeats span residues 20-41 (NMRE…GVTR), 43-64 (QFDV…PTFS), 65-86 (RLNT…IATK), and 89-110 (NLKT…EPLA). An LRRCT domain is found at 123 to 161 (NPITHKDNYRMYMIYKLPTVRVIDFNRVRLTEREAAKKM). Disordered regions lie at residues 163–205 (KGKS…EDRE) and 232–253 (VPEK…AMES). A compositionally biased stretch (basic and acidic residues) spans 169–182 (KARDAIQKSVHTED).

Belongs to the U2 small nuclear ribonucleoprotein A family. In terms of assembly, interacts with rnp-3.

It localises to the nucleus. Its function is as follows. This protein is associated with sn-RNP U2. It helps the A' protein to bind stem loop IV of U2 snRNA. Required maternally for early embryonic development and zygotically for germline and somatic development. Has a role in the switch from mitosis to meiosis. Might function in alternative splicing. This is Probable U2 small nuclear ribonucleoprotein A' (mog-2) from Caenorhabditis elegans.